Consider the following 383-residue polypeptide: U-box domain-containing protein 63 (383 aa).

The tract at residues 166 to 186 (PDGNVSNSHRNTQQKRDFASV) is disordered. A U-box domain is found at 201 to 273 (SLKAILSDPV…HAFRQEEDSD (73 aa)).

The catalysed reaction is S-ubiquitinyl-[E2 ubiquitin-conjugating enzyme]-L-cysteine + [acceptor protein]-L-lysine = [E2 ubiquitin-conjugating enzyme]-L-cysteine + N(6)-ubiquitinyl-[acceptor protein]-L-lysine.. It functions in the pathway protein modification; protein ubiquitination. Functionally, functions as an E3 ubiquitin ligase. The chain is U-box domain-containing protein 63 (PUB63) from Arabidopsis thaliana (Mouse-ear cress).